The sequence spans 364 residues: MSKKMNSTPKKDGFWMPGEWEKHDQCWMIWPERSDNWRLGAKPAQRVFVNVANAIAKYEKVTMLVSHQQFENARNLLDQNVRVIEMSNDDSWMRDVGPTIVKNKDGEIRGVDWVFNAWEGFKGGLYFPWDKDDAIARKVCEICNIDYYRTDFVLEGGSIHTDGDGTLYTTEECLLNENRNPDLTKEQIEENLKEYCGVEKVIWLPLGVYNDETNGHVDNLLNVVSPGHVVLTWTDDTTDPQYERSKLAYDILTNTLDAKGRKIKVTKLHQPGPLFITKEEAEGIDVCDTMSREPEQRMPASYANYYIANNAIILPIFGDKYDDLAVKTLQSVYPNHKIETVMAREILLGGGNIHCITQQQPTTK.

The Amidino-cysteine intermediate role is filled by cysteine 355.

It belongs to the agmatine deiminase family.

It carries out the reaction agmatine + H2O = N-carbamoylputrescine + NH4(+). In Mycoplasma mycoides subsp. mycoides SC (strain CCUG 32753 / NCTC 10114 / PG1), this protein is Putative agmatine deiminase.